The sequence spans 712 residues: Probable GTP diphosphokinase RSH3, chloroplastic (712 aa).

A chloroplast-targeting transit peptide spans 1 to 64 (MVVATTIALY…LLFSGASVKS (64 aa)). Over residues 65-74 (SSSSSSSHPS) the composition is skewed to low complexity. A disordered region spans residues 65–84 (SSSSSSSHPSVGEELASIRH). Positions 237–338 (YLQHCVETAM…IKLADRLHNM (102 aa)) constitute an HD domain.

This sequence belongs to the RelA/SpoT family.

The protein localises to the plastid. The protein resides in the chloroplast. It catalyses the reaction GTP + ATP = guanosine 3'-diphosphate 5'-triphosphate + AMP. Probable ppGpp (guanosine 3'-diphosphate 5'-diphosphate) synthetase that may be involved in a rapid plant ppGpp-mediated response to pathogens and other stresses. This Arabidopsis thaliana (Mouse-ear cress) protein is Probable GTP diphosphokinase RSH3, chloroplastic (RSH3).